A 338-amino-acid chain; its full sequence is L-serine dehydratase (338 aa).

K39 is subject to N6-(pyridoxal phosphate)lysine.

It belongs to the serine/threonine dehydratase family. It depends on pyridoxal 5'-phosphate as a cofactor.

Its subcellular location is the cytoplasm. The enzyme catalyses L-serine = pyruvate + NH4(+). It functions in the pathway carbohydrate biosynthesis; gluconeogenesis. This is L-serine dehydratase (SDL1) from Saccharomyces cerevisiae (strain AWRI1631) (Baker's yeast).